We begin with the raw amino-acid sequence, 267 residues long: Tryptophan synthase alpha chain (267 aa).

Catalysis depends on proton acceptor residues glutamate 47 and aspartate 58.

Belongs to the TrpA family. Tetramer of two alpha and two beta chains.

It catalyses the reaction (1S,2R)-1-C-(indol-3-yl)glycerol 3-phosphate + L-serine = D-glyceraldehyde 3-phosphate + L-tryptophan + H2O. It functions in the pathway amino-acid biosynthesis; L-tryptophan biosynthesis; L-tryptophan from chorismate: step 5/5. In terms of biological role, the alpha subunit is responsible for the aldol cleavage of indoleglycerol phosphate to indole and glyceraldehyde 3-phosphate. This is Tryptophan synthase alpha chain from Chlorobium phaeovibrioides (strain DSM 265 / 1930) (Prosthecochloris vibrioformis (strain DSM 265)).